The chain runs to 583 residues: SHC-transforming protein 1 (583 aa).

Met-1 bears the N-acetylmethionine mark. Disordered stretches follow at residues 1 to 92 and 113 to 137; these read MDLL…DDGE and KLSG…WTRH. The segment covering 16 to 44 has biased composition (low complexity); that stretch reads ESLSSLEEGASGSTPPEELPSPSASSLGP. Ser-36 carries the phosphoserine modification. The residue at position 139 (Ser-139) is a Phosphoserine. An N6-acetyllysine modification is found at Lys-154. Residues 156–339 enclose the PID domain; it reads MGPGVSYLVR…AGFDGSAWDE (184 aa). The CH1 stretch occupies residues 340 to 487; it reads EEEEPPDHQY…SMAEQLRGEP (148 aa). 2 positions are modified to phosphotyrosine: Tyr-349 and Tyr-350. A disordered region spans residues 372–416; the sequence is AAPGAARSTAPSAQTPSHLGATLPVGQPVGGDPEVRKQMPPPPPC. Tyr-427 carries the phosphotyrosine modification. Ser-453 is modified (phosphoserine). One can recognise an SH2 domain in the interval 488-579; the sequence is WFHGKLSRRE…GSELCLQQPV (92 aa).

Interacts with CPNE3; this interaction may mediate the binding of CPNE3 with ERBB2. Interacts with the Trk receptors NTRK1, NTRK2 and NTRK3; in a phosphotyrosine-dependent manner. Interacts with the NPXY motif of tyrosine-phosphorylated IGF1R and INSR in vitro via the PID domain. Once activated, binds to GRB2. Interacts with tyrosine-phosphorylated CD3T and DDR2. Interacts with the N-terminal region of APS. Interacts with phosphorylated LRP1 and IRS4. Interacts with INPP5D/SHIP1 and INPPL1/SHIP2. Interacts with ALK, GAB2, GRB7 and KIT. Interacts with PTPN6/SHP (tyrosine phosphorylated). Identified in a complex containing FGFR4, NCAM1, CDH2, PLCG1, FRS2, SRC, SHC1, GAP43 and CTTN. Interacts with FLT4 (tyrosine-phosphorylated). Interacts with EPHB1 and GRB2; activates the MAPK/ERK cascade to regulate cell migration. Interacts with PDGFRB (tyrosine-phosphorylated). Interacts with ERBB4. Interacts with TEK/TIE2 (tyrosine-phosphorylated). Interacts with PTK2/FAK1. Interacts with CEACAM1; this interaction is CEACAM1-phosphorylation-dependent and mediates interaction with EGFR or INSR resulting in decrease coupling of SHC1 to the MAPK3/ERK1-MAPK1/ERK2 pathway. Interacts (via PID domain) with PEAK1 (when phosphorylated). Found in a complex with PPP1CA, PPP1CC, SHC1 and PEAK1. In terms of processing, phosphorylated by activated epidermal growth factor receptor. Phosphorylated in response to KIT signaling. Tyrosine phosphorylated in response to FLT3 and FLT4 signaling and by ligand-activated ALK. Tyrosine phosphorylated by ligand-activated PDGFRB. Tyrosine phosphorylated by TEK/TIE2. May be tyrosine phosphorylated by activated PTK2/FAK1. Tyrosine phosphorylated by activated PTK2B/PYK2. Dephosphorylation by PTPN2 may regulate interaction with GRB2.

The protein resides in the cytoplasm. Its subcellular location is the cell junction. It is found in the focal adhesion. Signaling adapter that couples activated growth factor receptors to signaling pathways. Participates in a signaling cascade initiated by activated KIT and KITLG/SCF. Participates in signaling downstream of the angiopoietin receptor TEK/TIE2, and plays a role in the regulation of endothelial cell migration and sprouting angiogenesis. In Pongo abelii (Sumatran orangutan), this protein is SHC-transforming protein 1 (SHC1).